The primary structure comprises 383 residues: Acetylornithine deacetylase (383 aa).

Residue histidine 80 coordinates Zn(2+). Aspartate 82 is a catalytic residue. Zn(2+) is bound at residue aspartate 112. The active site involves glutamate 144. The Zn(2+) site is built by glutamate 145, glutamate 169, and histidine 355.

It belongs to the peptidase M20A family. ArgE subfamily. In terms of assembly, homodimer. Requires Zn(2+) as cofactor. Co(2+) serves as cofactor. It depends on glutathione as a cofactor.

Its subcellular location is the cytoplasm. It catalyses the reaction N(2)-acetyl-L-ornithine + H2O = L-ornithine + acetate. The protein operates within amino-acid biosynthesis; L-arginine biosynthesis; L-ornithine from N(2)-acetyl-L-ornithine (linear): step 1/1. Catalyzes the hydrolysis of the amide bond of N(2)-acetylated L-amino acids. Cleaves the acetyl group from N-acetyl-L-ornithine to form L-ornithine, an intermediate in L-arginine biosynthesis pathway, and a branchpoint in the synthesis of polyamines. This is Acetylornithine deacetylase from Escherichia coli O9:H4 (strain HS).